Reading from the N-terminus, the 428-residue chain is Ribosomal RNA small subunit methyltransferase B (428 aa).

S-adenosyl-L-methionine-binding positions include 253-259 (CAAPGGK), aspartate 276, aspartate 302, and aspartate 321. Cysteine 374 acts as the Nucleophile in catalysis.

Belongs to the class I-like SAM-binding methyltransferase superfamily. RsmB/NOP family.

It localises to the cytoplasm. It catalyses the reaction cytidine(967) in 16S rRNA + S-adenosyl-L-methionine = 5-methylcytidine(967) in 16S rRNA + S-adenosyl-L-homocysteine + H(+). Its function is as follows. Specifically methylates the cytosine at position 967 (m5C967) of 16S rRNA. This Citrobacter koseri (strain ATCC BAA-895 / CDC 4225-83 / SGSC4696) protein is Ribosomal RNA small subunit methyltransferase B.